A 261-amino-acid polypeptide reads, in one-letter code: GTP cyclohydrolase FolE2 (261 aa).

It belongs to the GTP cyclohydrolase IV family.

The catalysed reaction is GTP + H2O = 7,8-dihydroneopterin 3'-triphosphate + formate + H(+). Its pathway is cofactor biosynthesis; 7,8-dihydroneopterin triphosphate biosynthesis; 7,8-dihydroneopterin triphosphate from GTP: step 1/1. In terms of biological role, converts GTP to 7,8-dihydroneopterin triphosphate. The sequence is that of GTP cyclohydrolase FolE2 from Fervidobacterium nodosum (strain ATCC 35602 / DSM 5306 / Rt17-B1).